Consider the following 176-residue polypeptide: Cytochrome b (176 aa).

3 consecutive transmembrane segments (helical) span residues F33–M53, W77–I98, and W113–L133. The heme b site is built by H83 and H97.

It belongs to the cytochrome b family. The cytochrome bc1 complex contains 11 subunits: 3 respiratory subunits (MT-CYB, CYC1 and UQCRFS1), 2 core proteins (UQCRC1 and UQCRC2) and 6 low-molecular weight proteins (UQCRH/QCR6, UQCRB/QCR7, UQCRQ/QCR8, UQCR10/QCR9, UQCR11/QCR10 and a cleavage product of UQCRFS1). This cytochrome bc1 complex then forms a dimer. Requires heme b as cofactor.

The protein localises to the mitochondrion inner membrane. Its function is as follows. Component of the ubiquinol-cytochrome c reductase complex (complex III or cytochrome b-c1 complex) that is part of the mitochondrial respiratory chain. The b-c1 complex mediates electron transfer from ubiquinol to cytochrome c. Contributes to the generation of a proton gradient across the mitochondrial membrane that is then used for ATP synthesis. In Nyctinomops aurispinosus (Peale's free-tailed bat), this protein is Cytochrome b (MT-CYB).